A 132-amino-acid polypeptide reads, in one-letter code: Hydrogenase maturation factor HypA (132 aa).

Histidine 2 contacts Ni(2+). Residues cysteine 74, cysteine 77, cysteine 91, and cysteine 94 each coordinate Zn(2+).

It belongs to the HypA/HybF family.

Involved in the maturation of [NiFe] hydrogenases. Required for nickel insertion into the metal center of the hydrogenase. This Synechococcus sp. (strain JA-2-3B'a(2-13)) (Cyanobacteria bacterium Yellowstone B-Prime) protein is Hydrogenase maturation factor HypA.